Here is a 511-residue protein sequence, read N- to C-terminus: 2-isopropylmalate synthase (511 aa).

In terms of domain architecture, Pyruvate carboxyltransferase spans 5–267 (LIIFDTTLRD…DTDINATHIL (263 aa)). Mn(2+) contacts are provided by aspartate 14, histidine 202, histidine 204, and asparagine 238. Residues 392–511 (KLVSLKVCTE…ATNKAQHPQI (120 aa)) are regulatory domain.

The protein belongs to the alpha-IPM synthase/homocitrate synthase family. LeuA type 1 subfamily. In terms of assembly, homodimer. Mn(2+) is required as a cofactor.

It is found in the cytoplasm. It catalyses the reaction 3-methyl-2-oxobutanoate + acetyl-CoA + H2O = (2S)-2-isopropylmalate + CoA + H(+). The protein operates within amino-acid biosynthesis; L-leucine biosynthesis; L-leucine from 3-methyl-2-oxobutanoate: step 1/4. Its function is as follows. Catalyzes the condensation of the acetyl group of acetyl-CoA with 3-methyl-2-oxobutanoate (2-ketoisovalerate) to form 3-carboxy-3-hydroxy-4-methylpentanoate (2-isopropylmalate). The polypeptide is 2-isopropylmalate synthase (Ruthia magnifica subsp. Calyptogena magnifica).